The sequence spans 180 residues: ATP-dependent protease subunit HslV (180 aa).

Threonine 5 is a catalytic residue. 3 residues coordinate Na(+): glycine 165, cysteine 168, and threonine 171.

Belongs to the peptidase T1B family. HslV subfamily. As to quaternary structure, a double ring-shaped homohexamer of HslV is capped on each side by a ring-shaped HslU homohexamer. The assembly of the HslU/HslV complex is dependent on binding of ATP.

The protein localises to the cytoplasm. It catalyses the reaction ATP-dependent cleavage of peptide bonds with broad specificity.. Allosterically activated by HslU binding. In terms of biological role, protease subunit of a proteasome-like degradation complex believed to be a general protein degrading machinery. The polypeptide is ATP-dependent protease subunit HslV (Helicobacter pylori (strain J99 / ATCC 700824) (Campylobacter pylori J99)).